The sequence spans 363 residues: Spermidine/putrescine import ATP-binding protein PotA (363 aa).

One can recognise an ABC transporter domain in the interval 4 to 234 (LEIRNVTRRF…PRNHFVADFI (231 aa)). 36-43 (GPSGCGKT) serves as a coordination point for ATP.

Belongs to the ABC transporter superfamily. Spermidine/putrescine importer (TC 3.A.1.11.1) family. The complex is composed of two ATP-binding proteins (PotA), two transmembrane proteins (PotB and PotC) and a solute-binding protein (PotD).

Its subcellular location is the cell inner membrane. The enzyme catalyses ATP + H2O + polyamine-[polyamine-binding protein]Side 1 = ADP + phosphate + polyamineSide 2 + [polyamine-binding protein]Side 1.. Part of the ABC transporter complex PotABCD involved in spermidine/putrescine import. Responsible for energy coupling to the transport system. The sequence is that of Spermidine/putrescine import ATP-binding protein PotA from Nitrosospira multiformis (strain ATCC 25196 / NCIMB 11849 / C 71).